Reading from the N-terminus, the 711-residue chain is Polyribonucleotide nucleotidyltransferase (711 aa).

2 residues coordinate Mg(2+): D486 and D492. Residues 553 to 612 (PRIHTIKISTDKIKDVIGKGGSVIRALTEETGTTIEIEDDGTVKIAATDGEKAKYAIRRI) form the KH domain. One can recognise an S1 motif domain in the interval 622–690 (GRIYNSKVTR…RQGRVRLSIK (69 aa)). The tract at residues 689-711 (IKEATEQSQPAAAPEAPASEQAE) is disordered. The span at 694–711 (EQSQPAAAPEAPASEQAE) shows a compositional bias: low complexity.

Belongs to the polyribonucleotide nucleotidyltransferase family. As to quaternary structure, component of the RNA degradosome, which is a multiprotein complex involved in RNA processing and mRNA degradation. Requires Mg(2+) as cofactor.

It localises to the cytoplasm. It catalyses the reaction RNA(n+1) + phosphate = RNA(n) + a ribonucleoside 5'-diphosphate. Its function is as follows. Involved in mRNA degradation. Catalyzes the phosphorolysis of single-stranded polyribonucleotides processively in the 3'- to 5'-direction. The chain is Polyribonucleotide nucleotidyltransferase from Salmonella typhi.